A 401-amino-acid chain; its full sequence is Tyrosine--tRNA ligase (401 aa).

The 'HIGH' region motif lies at 41–50 (PSRPDLHLGH). The 'KMSKS' region motif lies at 225-229 (KMSKS). Residue lysine 228 participates in ATP binding. Positions 334–395 (KNIVDLLVEI…GKRKFYRISG (62 aa)) constitute an S4 RNA-binding domain.

Belongs to the class-I aminoacyl-tRNA synthetase family. TyrS type 2 subfamily. In terms of assembly, homodimer.

The protein resides in the cytoplasm. It catalyses the reaction tRNA(Tyr) + L-tyrosine + ATP = L-tyrosyl-tRNA(Tyr) + AMP + diphosphate + H(+). Functionally, catalyzes the attachment of tyrosine to tRNA(Tyr) in a two-step reaction: tyrosine is first activated by ATP to form Tyr-AMP and then transferred to the acceptor end of tRNA(Tyr). This is Tyrosine--tRNA ligase from Thermotoga maritima (strain ATCC 43589 / DSM 3109 / JCM 10099 / NBRC 100826 / MSB8).